Reading from the N-terminus, the 43-residue chain is Protein PsbN (43 aa).

A helical membrane pass occupies residues 5–27; the sequence is TLVAISISGLLVSFTGYALYTAF.

This sequence belongs to the PsbN family.

Its subcellular location is the plastid. The protein resides in the chloroplast thylakoid membrane. May play a role in photosystem I and II biogenesis. This Coelogyne cristata (Orchid) protein is Protein PsbN.